The sequence spans 421 residues: Mannose-1-phosphate guanylyltransferase regulatory subunit alpha (421 aa).

The interval 2–252 is substrate-binding domain; that stretch reads LKAVILIGGP…EGCWSQIKSA (251 aa). GDP-alpha-D-mannose-binding residues include E85 and Q248. The segment at 274-421 is hexapeptide repeat domain; sequence LASTKEGGPT…SRSFKNQIIL (148 aa). A C-loop region spans residues 357 to 385; that stretch reads TPSDPNPNDPYSKIDSETLFREGKLTPSI.

Belongs to the transferase hexapeptide repeat family. Component of the GMPPA-GMPPB mannose-1-phosphate guanylyltransferase complex composed of 4 gmppa subunits and 8 gmppb subunits; the complex is organized into three layers, a central layer made up of 2 gmppa dimers sandwiched between two layers each made up of 2 gmppb dimers.

It localises to the cytoplasm. In terms of biological role, regulatory subunit of the GMPPA-GMPPB mannose-1-phosphate guanylyltransferase complex; reduces the catalytic activity of GMPPB when part of the complex. Mediates allosteric feedback inhibition of GMPPB catalytic activity upon binding GDP-alpha-D-mannose. Together with GMPPB regulates GDP-alpha-D-mannose levels. This Xenopus tropicalis (Western clawed frog) protein is Mannose-1-phosphate guanylyltransferase regulatory subunit alpha (gmppa).